A 638-amino-acid polypeptide reads, in one-letter code: Guanylate-binding protein 7 (638 aa).

Residues 1 to 310 are GTPase domain (Globular); that stretch reads MASGPNMEAP…DAINSGDVPC (310 aa). The region spanning 35-277 is the GB1/RHD3-type G domain; that stretch reads TQPVVVVAIV…FCSYIFSNSK (243 aa). Residues 45–52, 67–69, and 97–101 contribute to the GTP site; these read GLYRTGKS, LGT, and DTEGL. The interaction with the CYBA-CYBB complex stretch occupies residues 311 to 638; that stretch reads LENAVTTLAQ…TQNSDKVRKL (328 aa). The tract at residues 590-638 is C-terminal tail; required for its localization to cytoplasmic vesicle; that stretch reads SSLGAKILDGFGDVLISVVPGSGKYFGLGLKILSSQMNQTQNSDKVRKL.

This sequence belongs to the TRAFAC class dynamin-like GTPase superfamily. GB1/RHD3 GTPase family. GB1 subfamily. In terms of assembly, monomer and dimer. Interacts with CYBA, CYBA-CYBB complex and ATG4B. Interacts (via GB1/RHD3-type G domain) with NCF2 and NCF2-NCF4 complex.

It localises to the cytoplasmic vesicle membrane. The catalysed reaction is GTP + H2O = GDP + phosphate + H(+). It carries out the reaction GDP + H2O = GMP + phosphate + H(+). With respect to regulation, inhibited by orthovanadate, berylium fluoride and aluminum flouride. Interferon (IFN)-inducible GTPase that plays important roles in innate immunity against a diverse range of bacterial, viral and protozoan pathogens. Hydrolyzes GTP to GMP in two consecutive cleavage reactions and predominantly uses GTP and not GDP or GMP as the substrate. Following infection, recruited to the pathogen-containing vacuoles or vacuole-escaped bacteria and acts as a positive regulator of inflammasome assembly by promoting the release of inflammasome ligands from bacteria. Acts by promoting lysis of pathogen-containing vacuoles, releasing pathogens into the cytosol. Following pathogen release in the cytosol, promotes recruitment of proteins that mediate bacterial cytolysis, such as Gm12250/Irgb10: this liberates ligands that are detected by inflammasomes, such as lipopolysaccharide (LPS) that activates the non-canonical CASP4/CASP11 inflammasome or double-stranded DNA (dsDNA) that activates the AIM2 inflammasome. Also promotes IFN-gamma-mediated host defense against bacterial infections by regulating oxidative responses and bacteriolytic peptide generation. May help to assemble NADPH oxidase on phagosomal membranes by acting as a bridging protein between NADPH oxidase cytosolic subunits NCF2-NCF4 and the membrane subunits CYBA-CYBB. Participates along with GBP1 in trafficking monoubiquinated protein cargo to autolysosomes for generating ubiquitin-derived antimicrobial peptides. Facilitates influenza A virus replication by inhibiting the activation of NF-kappaB and JAK-STAT signaling pathways and the expression of type I, type III interferons and pro-inflammatory cytokines. Confers protection to several pathogens, including the bacterial pathogens Listeria monocytogenes and Mycobacterium bovis BCG as well as the protozoan pathogen Toxoplasma gondii. Required for disruption of the parasitophorous vacuole formed following T.gondii infection and subsequent killing of the parasite. In Mus musculus (Mouse), this protein is Guanylate-binding protein 7 (Gbp7).